The following is a 344-amino-acid chain: N-acetyl-gamma-glutamyl-phosphate reductase (344 aa).

Cys-149 is a catalytic residue.

The protein belongs to the NAGSA dehydrogenase family. Type 1 subfamily.

It is found in the cytoplasm. The catalysed reaction is N-acetyl-L-glutamate 5-semialdehyde + phosphate + NADP(+) = N-acetyl-L-glutamyl 5-phosphate + NADPH + H(+). Its pathway is amino-acid biosynthesis; L-arginine biosynthesis; N(2)-acetyl-L-ornithine from L-glutamate: step 3/4. Catalyzes the NADPH-dependent reduction of N-acetyl-5-glutamyl phosphate to yield N-acetyl-L-glutamate 5-semialdehyde. In Thermoanaerobacter sp. (strain X514), this protein is N-acetyl-gamma-glutamyl-phosphate reductase.